A 471-amino-acid chain; its full sequence is Trehalose-binding lipoprotein LpqY (471 aa).

The signal sequence occupies residues 1-28 (MDGRQVVRARRWCATAAVALMTASTVAA). Cysteine 29 carries the N-palmitoyl cysteine lipid modification. Residue cysteine 29 is the site of S-diacylglycerol cysteine attachment. Alpha,alpha-trehalose contacts are provided by asparagine 45, glutamate 46, glutamine 79, aspartate 100, asparagine 154, tyrosine 198, tryptophan 279, tyrosine 281, glycine 354, and arginine 424. The cysteines at positions 57 and 375 are disulfide-linked.

The protein belongs to the bacterial solute-binding protein 1 family. Monomer. The complex is composed of two ATP-binding proteins (SugC), two transmembrane proteins (SugA and SugB) and a solute-binding protein (LpqY).

The protein localises to the cell inner membrane. In terms of biological role, part of the ABC transporter complex LpqY-SugA-SugB-SugC, which is highly specific for uptake of trehalose. Involved in the recycling of extracellular trehalose released from trehalose-containing molecules synthesized by M.thermoresistibile. Trehalose uptake is essential for virulence. Binds deuterated trehalose with similar high affinity to trehalose, trehalose analogs including galactotrehalose, 4-azido-4-deoxy-trehalose, 6-azido-6-deoxy-trehalose, 3-azido-3-deoxy-trehalose and mannotrehalose in the order of decreasing affinity, respectively, and 2-azido-2-deoxy-trehalose and kojibiose (alpha1,2-glycosidic bond) with very low affinity. Does not recognize single glucose, 6-amino-6-deoxy-trehalose, trehalose-6-phosphate, nigerose (alpha1,3-glycosidic bond), maltose (alpha1,4-glycosidic bond), isomaltose (alpha1,6-glycosidic bond) or glycerophosphocholine. Decreased recognition of alpha,beta-trehalose and almost no recognition of beta,beta-trehalose. Substrate specificity indicates a strict requirement for an alpha1,1-linked disaccharide. In Mycolicibacterium thermoresistibile (strain ATCC 19527 / DSM 44167 / CIP 105390 / JCM 6362 / NCTC 10409 / 316) (Mycobacterium thermoresistibile), this protein is Trehalose-binding lipoprotein LpqY.